A 264-amino-acid chain; its full sequence is S-adenosylmethionine decarboxylase proenzyme (264 aa).

Residue Ser-112 is the Schiff-base intermediate with substrate; via pyruvic acid of the active site. Position 112 is a pyruvic acid (Ser); by autocatalysis (Ser-112). The Proton acceptor; for processing activity role is filled by His-117. Cys-140 functions as the Proton donor; for catalytic activity in the catalytic mechanism.

It belongs to the prokaryotic AdoMetDC family. Type 2 subfamily. As to quaternary structure, heterooctamer of four alpha and four beta chains arranged as a tetramer of alpha/beta heterodimers. It depends on pyruvate as a cofactor. In terms of processing, is synthesized initially as an inactive proenzyme. Formation of the active enzyme involves a self-maturation process in which the active site pyruvoyl group is generated from an internal serine residue via an autocatalytic post-translational modification. Two non-identical subunits are generated from the proenzyme in this reaction, and the pyruvate is formed at the N-terminus of the alpha chain, which is derived from the carboxyl end of the proenzyme. The post-translation cleavage follows an unusual pathway, termed non-hydrolytic serinolysis, in which the side chain hydroxyl group of the serine supplies its oxygen atom to form the C-terminus of the beta chain, while the remainder of the serine residue undergoes an oxidative deamination to produce ammonia and the pyruvoyl group blocking the N-terminus of the alpha chain.

The catalysed reaction is S-adenosyl-L-methionine + H(+) = S-adenosyl 3-(methylsulfanyl)propylamine + CO2. The protein operates within amine and polyamine biosynthesis; S-adenosylmethioninamine biosynthesis; S-adenosylmethioninamine from S-adenosyl-L-methionine: step 1/1. Its function is as follows. Catalyzes the decarboxylation of S-adenosylmethionine to S-adenosylmethioninamine (dcAdoMet), the propylamine donor required for the synthesis of the polyamines spermine and spermidine from the diamine putrescine. This Escherichia coli O127:H6 (strain E2348/69 / EPEC) protein is S-adenosylmethionine decarboxylase proenzyme.